Reading from the N-terminus, the 398-residue chain is Cell cycle checkpoint control protein RAD9B (398 aa).

A compositionally biased stretch (polar residues) spans 272 to 281 (RTSSPQSLRL). Positions 272–359 (RTSSPQSLRL…DMEEGQSPSP (88 aa)) are disordered. Over residues 324 to 336 (SSSAAETRRASAS) the composition is skewed to low complexity. Phosphoserine is present on residues Ser-349 and Ser-358.

The protein belongs to the rad9 family. Interacts with HUS1, HUS1B, RAD1, RAD9A and RAD17.

The sequence is that of Cell cycle checkpoint control protein RAD9B (Rad9b) from Rattus norvegicus (Rat).